The sequence spans 305 residues: Cytochrome c biogenesis protein CcsA (305 aa).

8 helical membrane-spanning segments follow: residues 11–31 (GLGF…FWAV), 37–57 (TGIV…QLVL), 63–83 (GHFP…ACTL), 96–116 (IVAA…SFAL), 141–161 (VIMV…AVLL), 212–232 (TITV…VWAN), 246–263 (TWAL…HTRL), and 275–295 (VAVV…LLGI).

This sequence belongs to the CcmF/CycK/Ccl1/NrfE/CcsA family. In terms of assembly, may interact with ccs1.

Its subcellular location is the cellular thylakoid membrane. Its function is as follows. Required during biogenesis of c-type cytochromes (cytochrome c6 and cytochrome f) at the step of heme attachment. This Parasynechococcus marenigrum (strain WH8102) protein is Cytochrome c biogenesis protein CcsA.